The sequence spans 742 residues: uncharacterized protein (742 aa).

A disordered region spans residues 167-471 (GIVPPEPWGH…AAGAAGGGGA (305 aa)). The segment covering 205–218 (PAPPPSLFAPPPPS) has biased composition (pro residues). Polar residues-rich tracts occupy residues 318–331 (SPATSNEISSNAVS) and 358–368 (GSPQTLSTAPS). Residues 386–401 (TAGPAAPPTTGGPPAP) show a composition bias toward pro residues. Positions 421–432 (PLSGGVPGGAVP) are enriched in low complexity. Residues 433–447 (LGPPPTPPPAAPVTT) are compositionally biased toward pro residues. A compositionally biased stretch (low complexity) spans 448–464 (PPLASGAPVAPTGAAAG).

May be involved in the ESX-1 / type VII specialized secretion system (T7SS), which exports several proteins including EsxA and EsxB. Involved in DNA conjugation in the recipient strain. This is an uncharacterized protein from Mycolicibacterium smegmatis (strain MKD8) (Mycobacterium smegmatis).